The primary structure comprises 96 residues: MSQIMYNYPAMMAHAGDMAGYAGTLQSLGADIASEQAVLSSAWQGDTGITYQGWQTQWNQALEDLVRAYQSMSGTHESNTMAMLARDGAEAAKWGG.

It belongs to the WXG100 family. ESAT-6 subfamily.

Its subcellular location is the secreted. In Mycobacterium bovis (strain ATCC BAA-935 / AF2122/97), this protein is ESAT-6-like protein EsxR.